The following is a 332-amino-acid chain: Alpha-N-acetylgalactosaminide alpha-2,6-sialyltransferase 6 (332 aa).

The interval 1–26 is disordered; the sequence is MACPRPLSQCDHTPLPGPPAGHWPLP. Over 1 to 42 the chain is Cytoplasmic; the sequence is MACPRPLSQCDHTPLPGPPAGHWPLPLSRRRREMKSNKEQRS. Residues 43–63 form a helical; Signal-anchor for type II membrane protein membrane-spanning segment; sequence AVFVILFALITILILYSSSSA. At 64–332 the chain is on the lumenal side; that stretch reads NEVFHYGSLR…GITFSHPSWT (269 aa). N97 carries an N-linked (GlcNAc...) asparagine glycan. Cysteines 107 and 255 form a disulfide.

Belongs to the glycosyltransferase 29 family.

The protein localises to the golgi apparatus membrane. It carries out the reaction a ganglioside GM1b (d18:1(4E)) + CMP-N-acetyl-beta-neuraminate = a ganglioside GD1alpha (d18:1(4E)) + CMP + H(+). It catalyses the reaction N-acetyl-alpha-neuraminosyl-(2-&gt;3)-beta-D-galactosyl-(1-&gt;3)-N-acetyl-beta-D-glucosaminyl-(1-&gt;3)-beta-D-galactosyl-(1-&gt;4)-beta-D-glucosyl-(1&lt;-&gt;1')-N-acyl-sphing-4-enine + CMP-N-acetyl-beta-neuraminate = N-acetyl-alpha-neuraminosyl-(2-&gt;3)-beta-D-galactosyl-(1-&gt;3)-[N-acetyl-alpha-neuraminosyl-(2-&gt;6)]-N-acetyl-beta-D-glucosaminyl-(1-&gt;3)-beta-D-galactosyl-(1-&gt;4)-beta-D-glucosyl-(1&lt;-&gt;1')-N-acyl-sphing-4-enine + CMP + H(+). The catalysed reaction is a globoside MSGG + CMP-N-acetyl-beta-neuraminate = a globoside DSGG + CMP + H(+). The enzyme catalyses a ganglioside GD1a (d18:1(4E)) + CMP-N-acetyl-beta-neuraminate = a ganglioside GT1aalpha (d18:1(4E)) + CMP + H(+). It carries out the reaction a ganglioside GT1b (d18:1(4E)) + CMP-N-acetyl-beta-neuraminate = a ganglioside GQ1balpha (d18:1(4E)) + CMP + H(+). It catalyses the reaction 3-O-[alpha-Neu5Ac-(2-&gt;3)-beta-D-Gal-(1-&gt;3)-alpha-D-GalNAc]-L-Ser-[protein] + CMP-N-acetyl-beta-neuraminate = a 3-O-{alpha-Neu5Ac-(2-&gt;3)-beta-D-Gal-(1-&gt;3)-[alpha-Neu5Ac-(2-&gt;6)]-alpha-D-GalNAc}-L-seryl-[protein] + CMP + H(+). The catalysed reaction is 3-O-[alpha-Neu5Ac-(2-&gt;3)-beta-D-Gal-(1-&gt;3)-alpha-D-GalNAc]-L-Thr-[protein] + CMP-N-acetyl-beta-neuraminate = a 3-O-{alpha-Neu5Ac-(2-&gt;3)-beta-D-Gal-(1-&gt;3)-[alpha-Neu5Ac-(2-&gt;6)]-alpha-D-GalNAc}-L-threonyl-[protein] + CMP + H(+). Functionally, transfers the sialyl group (N-acetyl-alpha-neuraminyl or NeuAc) from CMP-NeuAc onto glycoproteins and glycolipids, forming an alpha-2,6-linkage. Produces branched type disialyl structures by transfer of a sialyl group onto the GalNAc or GlcNAc residue inside backbone core chains having a terminal sialic acid with an alpha-2,3-linkage on Gal. ST6GalNAcVI prefers glycolipids to glycoproteins, predominantly catalyzing the biosynthesis of ganglioside GD1alpha from GM1b. Besides GMb1, MSGG and other glycolipids, it shows activity towards sialyl Lc4Cer generating disialyl Lc4Cer, which can lead to the synthesis of disialyl Lewis a (Le(a)), suggested to be a cancer-associated antigen. Also has activity toward GD1a and GT1b, and can generate DSGG (disialylgalactosylgloboside) from MSGG (monosialylgalactosylgloboside). This chain is Alpha-N-acetylgalactosaminide alpha-2,6-sialyltransferase 6 (ST6GALNAC6), found in Bos taurus (Bovine).